A 353-amino-acid chain; its full sequence is uncharacterized protein (353 aa).

The next 9 helical transmembrane spans lie at 16–36 (AAYI…ISCG), 77–97 (VVLA…FQGL), 106–128 (YTLG…GLHL), 140–160 (SVAA…LVHA), 167–187 (LILT…LIIA), 208–228 (GWSY…LLII), 263–283 (LLTG…LVIP), 296–316 (HLLP…DLLS), and 323–343 (IELP…ALIL).

The protein belongs to the binding-protein-dependent transport system permease family. FecCD subfamily. The complex is composed of two ATP-binding proteins (YvrA), two transmembrane proteins (YvrB) and a solute-binding protein (YvrC).

It is found in the cell membrane. Probably part of an ABC transporter complex. Probably responsible for the translocation of the substrate across the membrane. This is an uncharacterized protein from Bacillus subtilis (strain 168).